The following is a 447-amino-acid chain: Probable glycine dehydrogenase (decarboxylating) subunit 1 (447 aa).

This sequence belongs to the GcvP family. N-terminal subunit subfamily. As to quaternary structure, the glycine cleavage system is composed of four proteins: P, T, L and H. In this organism, the P 'protein' is a heterodimer of two subunits.

The enzyme catalyses N(6)-[(R)-lipoyl]-L-lysyl-[glycine-cleavage complex H protein] + glycine + H(+) = N(6)-[(R)-S(8)-aminomethyldihydrolipoyl]-L-lysyl-[glycine-cleavage complex H protein] + CO2. The glycine cleavage system catalyzes the degradation of glycine. The P protein binds the alpha-amino group of glycine through its pyridoxal phosphate cofactor; CO(2) is released and the remaining methylamine moiety is then transferred to the lipoamide cofactor of the H protein. The protein is Probable glycine dehydrogenase (decarboxylating) subunit 1 of Sulfolobus acidocaldarius (strain ATCC 33909 / DSM 639 / JCM 8929 / NBRC 15157 / NCIMB 11770).